The primary structure comprises 2602 residues: Filamin-B (2602 aa).

An actin-binding region spans residues 1-239; the sequence is MPVTEKDLAE…VMTYLSQFPK (239 aa). Calponin-homology (CH) domains lie at 16–122 and 139–242; these read KIQQ…LHYS and QTPK…KAKL. T216 carries the post-translational modification Phosphothreonine. The disordered stretch occupies residues 244-267; the sequence is PGAPLKPKLNPKKARAYGRGIEPT. Filamin repeat units lie at residues 249 to 347, 349 to 446, 447 to 543, 544 to 636, 640 to 736, 737 to 839, 840 to 938, 939 to 1034, 1035 to 1127, 1128 to 1222, 1223 to 1322, 1323 to 1415, 1416 to 1511, 1512 to 1608, and 1609 to 1704; these read KPKL…EVSV, KAQG…VVQV, GEAC…EVQV, GPEA…MAFI, TGGY…RVNI, GQGS…RVKV, DPSH…TVGV, AAPL…TVEA, SLPP…KADI, EMPF…RVKV, EPAV…KVAV, TEGC…RVPV, KDVV…KVKV, LPTY…RIRA, and TQTG…TVMA. Position 519 is a phosphothreonine (T519). K681 bears the N6-acetyllysine mark. S730 is modified (phosphoserine). S886, S932, S983, and S1028 each carry phosphoserine. The tract at residues 1128–1511 is interaction with FBLP1; it reads EMPFDPSKVV…IPRSPFKVKV (384 aa). Phosphothreonine is present on T1307. S1316 is modified (phosphoserine). S1433, N1474, S1505, and S1602 each carry phosphoserine. Residues 1705-1728 form a hinge 1 region; it reads TDGEVTAVEEAPVNACPPGFRPWV. Filamin repeat units follow at residues 1729 to 1813, 1816 to 1908, 1919 to 1994, 1997 to 2089, 2091 to 2185, 2188 to 2280, 2282 to 2375, and 2379 to 2471; these read TEEA…SPLQ, VNYP…TAKI, KLGS…SIMV, SEIG…TVKI, GEGR…QFTV, LGEG…LVPV, APSD…KVRV, and GQAG…KAKV. K1780 carries the N6-acetyllysine modification. The interaction with the cytoplasmic tail of GP1BA stretch occupies residues 1862-2148; that stretch reads SKAEISCIDN…RVTEAEIVPM (287 aa). The segment at 2060 to 2225 is interaction with FLNA 1; sequence SYFPTVPGVY…IWTREAGAGG (166 aa). Residues S2083, S2107, and S2113 each carry the phosphoserine modification. An interaction with INPPL1 region spans residues 2130–2602; it reads SAHVTSPSGR…PGSPFHVTVP (473 aa). 2 positions are modified to phosphoserine: S2369 and S2465. K2468 participates in a covalent cross-link: Glycyl lysine isopeptide (Lys-Gly) (interchain with G-Cter in ISG15). The hinge 2 stretch occupies residues 2472-2506; sequence TGQRLVSPGSANETSSILVESVTRSSTETCYSAIP. The tract at residues 2472-2602 is self-association site, tail; sequence TGQRLVSPGS…PGSPFHVTVP (131 aa). A phosphoserine mark is found at S2478, S2481, and S2492. Residues 2507–2601 form a Filamin 24 repeat; the sequence is KASSDASKVT…IPGSPFHVTV (95 aa). The interval 2507–2602 is interaction with FLNA 2; that stretch reads KASSDASKVT…PGSPFHVTVP (96 aa). N6-succinyllysine occurs at positions 2518 and 2524. The residue at position 2576 (K2576) is an N6-acetyllysine.

Belongs to the filamin family. In terms of assembly, homodimer. Interacts with MICALL2. Interacts with RFLNA and RFLNB. Isoform 1 interacts with FBLP1, FLNA, FLNC, GP1BA, INPPL1, ITGB1A, PSEN1 and PSEN2. Isoform 3 interacts with ITGB1A, ITGB1D, ITGB3 and ITGB6. Interacts with MYOT and MYOZ1. Interacts with HBV capsid protein. Interacts with ASB2 isoform 1; the interaction targets FLNB for proteasomal degradation. In terms of processing, ISGylation prevents ability to interact with the upstream activators of the JNK cascade and inhibits IFNA-induced JNK signaling. Ubiquitination by a SCF-like complex containing ASB2 isoform 1 leads to proteasomal degradation which promotes muscle differentiation. In terms of tissue distribution, ubiquitous. Isoform 1 and isoform 2 are expressed in placenta, bone marrow, brain, umbilical vein endothelial cells (HUVEC), retina and skeletal muscle. Isoform 1 is predominantly expressed in prostate, uterus, liver, thyroid, stomach, lymph node, small intestine, spleen, skeletal muscle, kidney, placenta, pancreas, heart, lung, platelets, endothelial cells, megakaryocytic and erythroleukemic cell lines. Isoform 2 is predominantly expressed in spinal cord, platelet and Daudi cells. Also expressed in thyroid adenoma, neurofibrillary tangles (NFT), senile plaques in the hippocampus and cerebral cortex in Alzheimer disease (AD). Isoform 3 and isoform 6 are expressed predominantly in lung, heart, skeletal muscle, testis, spleen, thymus and leukocytes. Isoform 4 and isoform 5 are expressed in heart.

Its subcellular location is the cytoplasm. The protein localises to the cell cortex. The protein resides in the cytoskeleton. It is found in the stress fiber. It localises to the myofibril. Its subcellular location is the sarcomere. The protein localises to the z line. In terms of biological role, connects cell membrane constituents to the actin cytoskeleton. May promote orthogonal branching of actin filaments and links actin filaments to membrane glycoproteins. Anchors various transmembrane proteins to the actin cytoskeleton. Interaction with FLNA may allow neuroblast migration from the ventricular zone into the cortical plate. Various interactions and localizations of isoforms affect myotube morphology and myogenesis. Isoform 6 accelerates muscle differentiation in vitro. This chain is Filamin-B (FLNB), found in Homo sapiens (Human).